We begin with the raw amino-acid sequence, 162 residues long: Protein SLM4 (162 aa).

A helical membrane pass occupies residues 127–144 (LLLLFIAEGSFPYGLLVI).

Component of the GSE complex composed of GTR1, GTR2, SLM4, MEH1 and LTV1. Component of the EGO complex, at least composed of GTR2, SLM4 and MEH1.

The protein resides in the vacuole membrane. Functionally, component of the GSE complex, a GTPase complex required for intracellular sorting of GAP1 out of the endosome. Component of the EGO complex, a complex involved in the regulation of microautophagy. In Saccharomyces cerevisiae (strain ATCC 204508 / S288c) (Baker's yeast), this protein is Protein SLM4 (SLM4).